Consider the following 211-residue polypeptide: Thiamine-phosphate synthase (211 aa).

4-amino-2-methyl-5-(diphosphooxymethyl)pyrimidine is bound by residues 41 to 45 (QYRDK) and asparagine 73. Mg(2+)-binding residues include aspartate 74 and aspartate 93. Threonine 112 is a 4-amino-2-methyl-5-(diphosphooxymethyl)pyrimidine binding site. A 2-[(2R,5Z)-2-carboxy-4-methylthiazol-5(2H)-ylidene]ethyl phosphate-binding site is contributed by 139-141 (SPT). Position 142 (lysine 142) interacts with 4-amino-2-methyl-5-(diphosphooxymethyl)pyrimidine. Residues glycine 169 and 189–190 (VS) each bind 2-[(2R,5Z)-2-carboxy-4-methylthiazol-5(2H)-ylidene]ethyl phosphate.

The protein belongs to the thiamine-phosphate synthase family. Requires Mg(2+) as cofactor.

The enzyme catalyses 2-[(2R,5Z)-2-carboxy-4-methylthiazol-5(2H)-ylidene]ethyl phosphate + 4-amino-2-methyl-5-(diphosphooxymethyl)pyrimidine + 2 H(+) = thiamine phosphate + CO2 + diphosphate. It carries out the reaction 2-(2-carboxy-4-methylthiazol-5-yl)ethyl phosphate + 4-amino-2-methyl-5-(diphosphooxymethyl)pyrimidine + 2 H(+) = thiamine phosphate + CO2 + diphosphate. It catalyses the reaction 4-methyl-5-(2-phosphooxyethyl)-thiazole + 4-amino-2-methyl-5-(diphosphooxymethyl)pyrimidine + H(+) = thiamine phosphate + diphosphate. The protein operates within cofactor biosynthesis; thiamine diphosphate biosynthesis; thiamine phosphate from 4-amino-2-methyl-5-diphosphomethylpyrimidine and 4-methyl-5-(2-phosphoethyl)-thiazole: step 1/1. Functionally, condenses 4-methyl-5-(beta-hydroxyethyl)thiazole monophosphate (THZ-P) and 2-methyl-4-amino-5-hydroxymethyl pyrimidine pyrophosphate (HMP-PP) to form thiamine monophosphate (TMP). This chain is Thiamine-phosphate synthase, found in Thioalkalivibrio sulfidiphilus (strain HL-EbGR7).